Consider the following 316-residue polypeptide: CRISPR-associated endonuclease Cas1 (316 aa).

Residues E143, H206, and E221 each contribute to the Mn(2+) site.

It belongs to the CRISPR-associated endonuclease Cas1 family. In terms of assembly, homodimer, forms a heterotetramer with a Cas2 homodimer. Requires Mg(2+) as cofactor. Mn(2+) is required as a cofactor.

Functionally, CRISPR (clustered regularly interspaced short palindromic repeat), is an adaptive immune system that provides protection against mobile genetic elements (viruses, transposable elements and conjugative plasmids). CRISPR clusters contain spacers, sequences complementary to antecedent mobile elements, and target invading nucleic acids. CRISPR clusters are transcribed and processed into CRISPR RNA (crRNA). Acts as a dsDNA endonuclease. Involved in the integration of spacer DNA into the CRISPR cassette. This chain is CRISPR-associated endonuclease Cas1, found in Aquifex aeolicus (strain VF5).